The following is a 166-amino-acid chain: Macrocypin-5a (166 aa).

Residues 20–39 (NIPGGMYASSKDGKDEPVTA) are disordered.

The protein belongs to the protease inhibitor I85 family.

Functionally, inhibits papain and cysteine cathepsin endopeptidases, and also inhibits cathepsins B and H, which exhibit both exopeptidase and endopeptidase activities. The protein is Macrocypin-5a of Macrolepiota procera (Parasol mushroom).